The sequence spans 120 residues: UPF0344 protein lin2366 (120 aa).

4 helical membrane-spanning segments follow: residues 3–23 (GYVHLISWVAIVVLTVTALLI), 33–53 (MLQMINRVFYILVILSGIMMV), 62–82 (ILAIFKILMGIIVIGVVEMLL), and 92–112 (GMFLMIFIIVVVITVSLGFYL).

This sequence belongs to the UPF0344 family.

Its subcellular location is the cell membrane. The chain is UPF0344 protein lin2366 from Listeria innocua serovar 6a (strain ATCC BAA-680 / CLIP 11262).